A 180-amino-acid polypeptide reads, in one-letter code: MVPRLKEKYQTEVVPALMQEFRYRSVMQVPRIEKIVLNIGLGEAIQNSKALDAATADLAAIAGQKPVITRARKSIAAFKVRQGMPIGVMVTLRGPRMWSFLDRLMNLVLPRLRDFRGVSRRSFDGRGNYSIGLREQIVFPEIDYDKVDKLRGLEVVIVTTAPDDEQGYALLKRLGMPFRD.

It belongs to the universal ribosomal protein uL5 family. As to quaternary structure, part of the 50S ribosomal subunit; part of the 5S rRNA/L5/L18/L25 subcomplex. Contacts the 5S rRNA and the P site tRNA. Forms a bridge to the 30S subunit in the 70S ribosome.

Functionally, this is one of the proteins that bind and probably mediate the attachment of the 5S RNA into the large ribosomal subunit, where it forms part of the central protuberance. In the 70S ribosome it contacts protein S13 of the 30S subunit (bridge B1b), connecting the 2 subunits; this bridge is implicated in subunit movement. Contacts the P site tRNA; the 5S rRNA and some of its associated proteins might help stabilize positioning of ribosome-bound tRNAs. The chain is Large ribosomal subunit protein uL5 from Roseiflexus sp. (strain RS-1).